A 270-amino-acid chain; its full sequence is 4-hydroxy-tetrahydrodipicolinate reductase (270 aa).

Residue 7-12 (GANGRM) coordinates NAD(+). Arg-34 is an NADP(+) binding site. Residues 97 to 99 (GTT) and 121 to 124 (SGNM) contribute to the NAD(+) site. The active-site Proton donor/acceptor is the His-155. His-156 lines the (S)-2,3,4,5-tetrahydrodipicolinate pocket. The active-site Proton donor is the Lys-159. 165–166 (GT) contacts (S)-2,3,4,5-tetrahydrodipicolinate.

The protein belongs to the DapB family.

Its subcellular location is the cytoplasm. The catalysed reaction is (S)-2,3,4,5-tetrahydrodipicolinate + NAD(+) + H2O = (2S,4S)-4-hydroxy-2,3,4,5-tetrahydrodipicolinate + NADH + H(+). It catalyses the reaction (S)-2,3,4,5-tetrahydrodipicolinate + NADP(+) + H2O = (2S,4S)-4-hydroxy-2,3,4,5-tetrahydrodipicolinate + NADPH + H(+). It functions in the pathway amino-acid biosynthesis; L-lysine biosynthesis via DAP pathway; (S)-tetrahydrodipicolinate from L-aspartate: step 4/4. Catalyzes the conversion of 4-hydroxy-tetrahydrodipicolinate (HTPA) to tetrahydrodipicolinate. This Bartonella tribocorum (strain CIP 105476 / IBS 506) protein is 4-hydroxy-tetrahydrodipicolinate reductase.